Here is a 189-residue protein sequence, read N- to C-terminus: Xanthine phosphoribosyltransferase (189 aa).

2 residues coordinate xanthine: Leu20 and Asn27. Residue 128–132 (ANGQA) participates in 5-phospho-alpha-D-ribose 1-diphosphate binding. Lys156 serves as a coordination point for xanthine.

This sequence belongs to the purine/pyrimidine phosphoribosyltransferase family. Xpt subfamily. As to quaternary structure, homodimer.

It is found in the cytoplasm. It carries out the reaction XMP + diphosphate = xanthine + 5-phospho-alpha-D-ribose 1-diphosphate. Its pathway is purine metabolism; XMP biosynthesis via salvage pathway; XMP from xanthine: step 1/1. In terms of biological role, converts the preformed base xanthine, a product of nucleic acid breakdown, to xanthosine 5'-monophosphate (XMP), so it can be reused for RNA or DNA synthesis. The protein is Xanthine phosphoribosyltransferase of Leuconostoc mesenteroides subsp. mesenteroides (strain ATCC 8293 / DSM 20343 / BCRC 11652 / CCM 1803 / JCM 6124 / NCDO 523 / NBRC 100496 / NCIMB 8023 / NCTC 12954 / NRRL B-1118 / 37Y).